Reading from the N-terminus, the 310-residue chain is Olfactory receptor 2A1/2A42 (310 aa).

Topologically, residues 1-24 (MGENQTMVTEFLLLGFLLGPRIQM) are extracellular. An N-linked (GlcNAc...) asparagine glycan is attached at Asn4. Residues 25 to 48 (LLFGLFSLFYIFTLLGNGAILGLI) form a helical membrane-spanning segment. Residues 49–56 (SLDSRLHT) lie on the Cytoplasmic side of the membrane. Residues 57–78 (PMYFFLSHLAVVDIAYTRNTVP) traverse the membrane as a helical segment. At 79 to 99 (QMLANLLHPAKPISFAGCMTQ) the chain is on the extracellular side. Cys96 and Cys188 are oxidised to a cystine. A helical membrane pass occupies residues 100-119 (TFLCLSFGHSECLLLVLMSY). The Cytoplasmic portion of the chain corresponds to 120–138 (DRYVAICHPLRYSVIMTWR). The chain crosses the membrane as a helical span at residues 139-157 (VCITLAVTSWTCGSLLALA). Topologically, residues 158–195 (HVVLILRLPFSGPHEINHFFCEILSVLRLACADTWLNQ) are extracellular. A helical transmembrane segment spans residues 196-218 (VVIFAACVFFLVGPPSLVLVSYS). The Cytoplasmic segment spans residues 219 to 235 (HILAAILRIQSGEGRRK). A helical transmembrane segment spans residues 236-258 (AFSTCSSHLCVVGLFFGSAIIMY). The Extracellular segment spans residues 259 to 271 (MAPKSRHPEEQQK). Residues 272 to 291 (VFFLFYSFFNPTLNPLIYSL) traverse the membrane as a helical segment. Over 292-310 (RNGEVKGALRRALGKESHS) the chain is Cytoplasmic.

Belongs to the G-protein coupled receptor 1 family.

Its subcellular location is the cell membrane. Its function is as follows. Odorant receptor. The polypeptide is Olfactory receptor 2A1/2A42 (OR2A1) (Homo sapiens (Human)).